The following is a 295-amino-acid chain: DegV domain-containing protein MG326 (295 aa).

The 289-residue stretch at 4–292 (TAIITDSTAS…IDAFSISLLI (289 aa)) folds into the DegV domain. Positions 63 and 95 each coordinate hexadecanoate.

May bind long-chain fatty acids, such as palmitate, and may play a role in lipid transport or fatty acid metabolism. This Mycoplasma genitalium (strain ATCC 33530 / DSM 19775 / NCTC 10195 / G37) (Mycoplasmoides genitalium) protein is DegV domain-containing protein MG326.